The sequence spans 351 residues: MRKIIHVDMDCFFAAVEMRDNPALRDIPIAIGGSRERRGVISTANYPARKFGVRSAMPTGMALKLCPHLTLLPGRFDAYKEASNHIREIFSRYTSRIEPLSLDEAYLDVTDSVHCHGSATLIAQEIRQTIFNELQLTASAGVAPVKFLAKIASDMNKPNGQFVITPAEVPAFLQTLPLAKIPGVGKVSAAKLEAIGLRTCGDVQKCDLVILLKRFGKFGRILWERSQGIDERDVNSERLRKSVGVERTMAEDIHHWSECEAIIERLYPELERRLAKVKPDLLIARQGVKLKFDDFQQTTQEHVWPRLNKADLIATARKTWDERRGGRGVRLVGLHVTLLDPQMERQLVLGL.

Residues 4–185 (IIHVDMDCFF…LPLAKIPGVG (182 aa)) form the UmuC domain. Mg(2+) is bound by residues aspartate 8 and aspartate 103. Residue glutamate 104 is part of the active site.

Belongs to the DNA polymerase type-Y family. As to quaternary structure, monomer. Requires Mg(2+) as cofactor.

The protein resides in the cytoplasm. The catalysed reaction is DNA(n) + a 2'-deoxyribonucleoside 5'-triphosphate = DNA(n+1) + diphosphate. In terms of biological role, poorly processive, error-prone DNA polymerase involved in untargeted mutagenesis. Copies undamaged DNA at stalled replication forks, which arise in vivo from mismatched or misaligned primer ends. These misaligned primers can be extended by PolIV. Exhibits no 3'-5' exonuclease (proofreading) activity. May be involved in translesional synthesis, in conjunction with the beta clamp from PolIII. This Shigella dysenteriae serotype 1 (strain Sd197) protein is DNA polymerase IV.